Reading from the N-terminus, the 465-residue chain is Alpha-2A adrenergic receptor (465 aa).

Topologically, residues 1-48 are extracellular; that stretch reads MFRQEQPLAEGSFAPMGSLQPEAGNASWNGTEAPGGGARATPYSLQVT. 2 N-linked (GlcNAc...) asparagine glycosylation sites follow: Asn25 and Asn29. Residues 49 to 74 traverse the membrane as a helical segment; sequence LTLVCLAGLLMLFTVFGNVLVIIAVF. The Cytoplasmic portion of the chain corresponds to 75–85; sequence TSRALKAPQNL. A helical membrane pass occupies residues 86–111; sequence FLVSLASADILVATLVIPFSLANEVM. Topologically, residues 112 to 121 are extracellular; the sequence is GYWYFGKAWC. Residues Cys121 and Cys203 are joined by a disulfide bond. A helical transmembrane segment spans residues 122-144; sequence EIYLALDVLFCTSSIVHLCAISL. Residues 145 to 164 are Cytoplasmic-facing; the sequence is DRYWSITQAIEYNLKRTPRR. A helical membrane pass occupies residues 165-188; that stretch reads IKAIIVTVWVISAVISFPPLISIE. The Extracellular portion of the chain corresponds to 189–207; that stretch reads KKAGGGGQQPAEPRCEIND. A helical transmembrane segment spans residues 208-232; that stretch reads QKWYVISSCIGSFFAPCLIMILVYV. Topologically, residues 233 to 389 are cytoplasmic; the sequence is RIYQIAKRRT…RQNREKRFTF (157 aa). The interval 242-377 is disordered; the sequence is TRVPPSRRGP…RGGVAKASRW (136 aa). Residues 313-330 show a composition bias toward basic and acidic residues; the sequence is SSEHAERPPGPRRSERGP. The residue at position 346 (Ser346) is a Phosphoserine. Arg368 carries the omega-N-methylarginine modification. The helical transmembrane segment at 390–414 threads the bilayer; the sequence is VLAVVIGVFVVCWFPFFFTYTLTAV. At 415-424 the chain is on the extracellular side; it reads GCSVPPTLFK. The chain crosses the membrane as a helical span at residues 425–445; it reads FFFWFGYCNSSLNPVIYTIFN. The Cytoplasmic portion of the chain corresponds to 446–465; that stretch reads HDFRRAFKKILCRGDRKRIV. Cys457 carries the S-palmitoyl cysteine lipid modification.

The protein belongs to the G-protein coupled receptor 1 family. Adrenergic receptor subfamily. ADRA2A sub-subfamily.

Its subcellular location is the cell membrane. Its function is as follows. Alpha-2 adrenergic receptors mediate the catecholamine-induced inhibition of adenylate cyclase through the action of G proteins. The sequence is that of Alpha-2A adrenergic receptor from Sus scrofa (Pig).